A 315-amino-acid chain; its full sequence is PIH1 domain-containing protein 2 (315 aa).

Belongs to the PIH1 family.

The protein is PIH1 domain-containing protein 2 (Pih1d2) of Mus musculus (Mouse).